The chain runs to 624 residues: Ceramide transfer protein (624 aa).

Positions 1–11 are enriched in polar residues; that stretch reads MSDNQSWNSSG. A disordered region spans residues 1–24; it reads MSDNQSWNSSGSEEDPETESGPPV. The PH domain occupies 23–117; sequence PVERCGVLSK…WIDAIEQHKT (95 aa). S126 is subject to Phosphoserine. Position 132 is a phosphoserine; by PKD (S132). S135 carries the phosphoserine modification. Residues 263 to 303 are a coiled coil; sequence IELMVKREDSWQKRLDKETEKKRRTEEAYKNAMTELKKKSH. At S315 the chain carries Phosphoserine. The FFAT motif lies at 321–327; that stretch reads EFFDAVE. Y372 carries the phosphotyrosine modification. 3 positions are modified to phosphoserine: S373, S377, and S380. In terms of domain architecture, START spans 389 to 618; it reads DVHRFSSQVE…FTSYVQEKTA (230 aa). The an N-acylsphing-4-enine site is built by E472, Q493, N530, and Y579.

As to quaternary structure, interacts with VAPA and VAPB. Interaction with VAPB is less efficient than with VAPA. Interacts (via FFAT motif) with MOSPD2 (via MSP domain). In terms of processing, phosphorylation on Ser-132 decreases the affinity toward phosphatidylinositol 4-phosphate at Golgi membranes and reduces ceramide transfer activity. Inactivated by hyperphosphorylation of serine residues by CSNK1G2/CK1 that triggers dissociation from the Golgi complex, thus down-regulating ER-to-Golgi transport of ceramide and sphingomyelin synthesis. As to expression, widely expressed.

It is found in the cytoplasm. The protein localises to the golgi apparatus. The protein resides in the endoplasmic reticulum. The enzyme catalyses N-hexadecanoylsphing-4-enine(in) = N-hexadecanoylsphing-4-enine(out). Its function is as follows. Shelters ceramides and diacylglycerol lipids inside its START domain and mediates the intracellular trafficking of ceramides and diacylglycerol lipids in a non-vesicular manner. This chain is Ceramide transfer protein, found in Homo sapiens (Human).